The primary structure comprises 41 residues: Photosystem I reaction center subunit IX (41 aa).

Residues 7–27 (YLSTVPVVFAIWLTFTAGLII) traverse the membrane as a helical segment.

Belongs to the PsaJ family.

The protein resides in the plastid. It localises to the chloroplast thylakoid membrane. In terms of biological role, may help in the organization of the PsaE and PsaF subunits. The sequence is that of Photosystem I reaction center subunit IX from Bigelowiella natans (Pedinomonas minutissima).